The following is a 342-amino-acid chain: Replication factor C subunit 4 (342 aa).

Residues valine 24, valine 36, 61-68 (GMPGIGKT), asparagine 157, and arginine 215 each bind ATP.

It belongs to the activator 1 small subunits family. As to quaternary structure, heteropentamer of subunits rfc1, rfc2, rfc3, rfc4 and rfc5 that forms a complex (RFC) with PCNA in the presence of ATP. Two other complexes exist where rfc1 can be replaced by either ctf18 or elg1 to form the ctf18-RFC or the elg1-RFC complexes respectively.

It localises to the nucleus. Functionally, the elongation of primed DNA templates by DNA polymerase delta and epsilon requires the action of the accessory proteins PCNA and activator 1. The chain is Replication factor C subunit 4 (rfc4) from Schizosaccharomyces pombe (strain 972 / ATCC 24843) (Fission yeast).